A 78-amino-acid chain; its full sequence is Small ribosomal subunit protein bS18 (78 aa).

It belongs to the bacterial ribosomal protein bS18 family. Part of the 30S ribosomal subunit. Forms a tight heterodimer with protein bS6.

Binds as a heterodimer with protein bS6 to the central domain of the 16S rRNA, where it helps stabilize the platform of the 30S subunit. In Beutenbergia cavernae (strain ATCC BAA-8 / DSM 12333 / CCUG 43141 / JCM 11478 / NBRC 16432 / NCIMB 13614 / HKI 0122), this protein is Small ribosomal subunit protein bS18.